We begin with the raw amino-acid sequence, 389 residues long: Acetoin utilization protein AcuC (389 aa).

Belongs to the histone deacetylase family.

It functions in the pathway ketone degradation; acetoin degradation. Role in growth on acetoin or butanediol. Involved in the breakdown of these compounds used as a carbon source. In Staphylococcus aureus (strain MSSA476), this protein is Acetoin utilization protein AcuC (acuC).